Consider the following 89-residue polypeptide: Small ribosomal subunit protein bS16c (89 aa).

Belongs to the bacterial ribosomal protein bS16 family.

It localises to the plastid. Its subcellular location is the chloroplast. In Morus indica (Mulberry), this protein is Small ribosomal subunit protein bS16c.